We begin with the raw amino-acid sequence, 101 residues long: MIPGQYQIQPGDIELNAGRRTLSLTVANSGDRPIQVGSHFHFFETNDALTFDRAASRGMRLNIPAGTAVRFEPGQSREVELVDLAGLRKVYGFAGRVMGEL.

This sequence belongs to the urease beta subunit family. Heterotrimer of UreA (gamma), UreB (beta) and UreC (alpha) subunits. Three heterotrimers associate to form the active enzyme.

Its subcellular location is the cytoplasm. It carries out the reaction urea + 2 H2O + H(+) = hydrogencarbonate + 2 NH4(+). Its pathway is nitrogen metabolism; urea degradation; CO(2) and NH(3) from urea (urease route): step 1/1. The chain is Urease subunit beta from Pseudomonas syringae pv. syringae (strain B728a).